The primary structure comprises 643 residues: E3 ubiquitin-protein ligase AMFR (643 aa).

Helical transmembrane passes span 82–102 (LFVW…AKLI), 122–142 (FWNF…VQTV), 186–206 (VLSL…VCCV), 215–235 (TLAF…HVIL), 254–274 (GTYV…LDLM), and 276–296 (HIHM…VIFM). Residues 341–379 (CAICWDSMQAARKLPCGHLFHNSCLRSWLEQDTSCPTCR) form an RING-type zinc finger. The chain crosses the membrane as a helical span at residues 429–449 (IASWLPSFSVEVMHTTNILGI). The region spanning 456-498 (QLNAMAHQIQEMFPQVPYHLVLQDLQMTRSVEITTDNILEGRI) is the CUE domain. The interval 504-535 (TQRSDSLRPALNSPVERPSPDLEEGEASVQTE) is disordered. Residues serine 516 and serine 542 each carry the phosphoserine modification. A disordered region spans residues 598-624 (LNKSSEDDGASERLLPSEGTSSDPVTL). The tract at residues 622-640 (VTLRRRMLAAAAERRLQRQ) is VCP/p97-interacting motif (VIM).

In terms of assembly, interacts with RNF5. Also forms an ERAD complex containing VCP/p97, NGLY1; PSMC1; SAKS1 and RAD23B required for coupling retrotranslocation, ubiquitination and deglycosylation. Interacts with DERL1. Interacts (through a region distinct from the RING finger) with UBE2G2/UBC7. Component of the VCP/p97-AMFR/gp78 complex that enhances VCP/p97 binding to polyubiquitinated proteins for their degradation by the endoplasmic reticulum-associated degradation (ERAD) pathway. Interacts (via the VIM) with VCP/p97. Interacts (via its membrane domain) with INSIG1; the interaction initiates the sterol-mediated ubiquitination and degradation of HMGCR by the ERAD pathway. Interacts with AUP1, UBE2G2 and RNF139/TRC8; interaction with AUP1 facilitates interaction of AMFR with ubiquitin-conjugating enzyme UBE2G2 and ubiquitin ligase RNF139, leading to sterol-induced ubiquitination of HNGCR and its subsequent proteasomal degradation. Interacts with BAG6. Interacts with USP13 (via UBA 2 domain); the interaction is direct. Interacts with LMBR1L, UBAC2 and CTNNB1. Interacts with C18orf32. Palmitoylation of the RING-type zing finger by ZDHHC6 promotes localization to the peripheral endoplasmic reticulum. In terms of tissue distribution, expressed in heart, brain, liver, lung, skeletal muscle, kidney and testis. Not detected in spleen.

The protein localises to the endoplasmic reticulum membrane. It catalyses the reaction [E2 ubiquitin-conjugating enzyme]-S-ubiquitinyl-L-cysteine + [acceptor protein]-L-cysteine = [E2 ubiquitin-conjugating enzyme]-L-cysteine + [acceptor protein]-S-ubiquitinyl-L-cysteine.. It participates in protein modification; protein ubiquitination. E3 ubiquitin-protein ligase that mediates the polyubiquitination of lysine and cysteine residues on target proteins, such as CD3D, CYP3A4, CFTR, INSIG1, SOAT2/ACAT2 and APOB for proteasomal degradation. Component of a VCP/p97-AMFR/gp78 complex that participates in the final step of endoplasmic reticulum-associated degradation (ERAD). The VCP/p97-AMFR/gp78 complex is involved in the sterol-accelerated ERAD degradation of HMGCR through binding to the HMGCR-INSIG1 complex at the ER membrane. In addition, interaction of AMFR with AUP1 facilitates interaction of AMFR with ubiquitin-conjugating enzyme UBE2G2 and ubiquitin ligase RNF139, leading to sterol-induced HMGCR ubiquitination. The ubiquitinated HMGCR is then released from the ER by the complex into the cytosol for subsequent destruction. In addition to ubiquitination on lysine residues, catalyzes ubiquitination on cysteine residues: together with INSIG1, mediates polyubiquitination of SOAT2/ACAT2 at 'Cys-277', leading to its degradation when the lipid levels are low. Catalyzes ubiquitination and subsequent degradation of INSIG1 when cells are depleted of sterols. Mediates polyubiquitination of INSIG2 at 'Cys-215' in some tissues, leading to its degradation. Also regulates ERAD through the ubiquitination of UBL4A a component of the BAG6/BAT3 complex. Also acts as a scaffold protein to assemble a complex that couples ubiquitination, retranslocation and deglycosylation. Mediates tumor invasion and metastasis as a receptor for the GPI/autocrine motility factor. In association with LMBR1L and UBAC2, negatively regulates the canonical Wnt signaling pathway in the lymphocytes by promoting the ubiquitin-mediated degradation of CTNNB1 and Wnt receptors FZD6 and LRP6. Regulates NF-kappa-B and MAPK signaling pathways by mediating 'Lys-27'-linked polyubiquitination of TAB3 and promoting subsequent TAK1/MAP3K7 activation. This is E3 ubiquitin-protein ligase AMFR (Amfr) from Mus musculus (Mouse).